Reading from the N-terminus, the 757-residue chain is POU domain, class 2, transcription factor 1 (757 aa).

Disordered regions lie at residues 1-43, 271-295, 375-398, and 532-574; these read MKLH…QTNG, AATPVQQLPQSQTTPKRIDTPSLEE, SLSNQSVLNSPGHGMEGLNRRRKK, and VSSV…TSPL. Polar residues-rich tracts occupy residues 19–43 and 275–285; these read RMNNPSETSKSSESGDGNTGTQTNG and VQQLPQSQTTP. Residues 294–368 enclose the POU-specific domain; sequence EEPSDLEELE…LLEKWLNDAE (75 aa). Residues 395–454 constitute a DNA-binding region (homeobox); it reads RRKKRTSIETNIRVALEKSFLENQKPTSEEITMIADQLNMEKEVIRVWFCNRRQKEKRIN.

This sequence belongs to the POU transcription factor family. Class-2 subfamily.

Its subcellular location is the cytoplasm. The protein localises to the nucleus. Its function is as follows. Transcription factor that binds to the octamer motif (5'-ATTTGCAT-3') and activates the promoters of the genes for some small nuclear RNAs (snRNA) and histone H2B. Acts downstream of Notch signaling during radial glia formation. Regulates apoptosis, possibly via an FGF-signaling pathway. This Xenopus tropicalis (Western clawed frog) protein is POU domain, class 2, transcription factor 1.